The primary structure comprises 37 residues: Photosystem I reaction center subunit VIII (37 aa).

A helical transmembrane segment spans residues 10 to 30 (IFVPLVGLVFPAIAMASLSLY).

It belongs to the PsaI family.

It is found in the plastid. The protein resides in the chloroplast thylakoid membrane. Its function is as follows. May help in the organization of the PsaL subunit. The sequence is that of Photosystem I reaction center subunit VIII from Gossypium barbadense (Sea Island cotton).